We begin with the raw amino-acid sequence, 365 residues long: Peptide chain release factor 2 (365 aa).

Gln-252 is subject to N5-methylglutamine.

The protein belongs to the prokaryotic/mitochondrial release factor family. In terms of processing, methylated by PrmC. Methylation increases the termination efficiency of RF2.

It is found in the cytoplasm. Peptide chain release factor 2 directs the termination of translation in response to the peptide chain termination codons UGA and UAA. This is Peptide chain release factor 2 from Aliivibrio fischeri (strain ATCC 700601 / ES114) (Vibrio fischeri).